Consider the following 509-residue polypeptide: Sperm-associated antigen 6 (509 aa).

ARM repeat units follow at residues 31–70 (PQNI…RLAN), 73–112 (DDLA…AVGK), 115–154 (PQLA…YIAR), 157–196 (AELS…DIAK), 199–238 (PELA…QVSK), 241–280 (VDLA…EIAK), 325–365 (ENLA…QIGR), and 368–409 (PEHA…NILQ).

Interacts with SPAG16 and SPAG17. As to expression, highly expressed in testis.

The protein localises to the cytoplasm. It localises to the cytoskeleton. Its subcellular location is the cell projection. It is found in the cilium. The protein resides in the flagellum. The protein localises to the cilium axoneme. Functionally, important for structural integrity of the central apparatus in the sperm tail and for flagellar motility. This is Sperm-associated antigen 6 (SPAG6) from Homo sapiens (Human).